Here is a 322-residue protein sequence, read N- to C-terminus: N-acetyl-gamma-glutamyl-phosphate reductase (322 aa).

The active site involves C132.

Belongs to the NAGSA dehydrogenase family. Type 1 subfamily.

The protein localises to the cytoplasm. It carries out the reaction N-acetyl-L-glutamate 5-semialdehyde + phosphate + NADP(+) = N-acetyl-L-glutamyl 5-phosphate + NADPH + H(+). Its pathway is amino-acid biosynthesis; L-arginine biosynthesis; N(2)-acetyl-L-ornithine from L-glutamate: step 3/4. Its function is as follows. Catalyzes the NADPH-dependent reduction of N-acetyl-5-glutamyl phosphate to yield N-acetyl-L-glutamate 5-semialdehyde. The polypeptide is N-acetyl-gamma-glutamyl-phosphate reductase (Parabacteroides distasonis (strain ATCC 8503 / DSM 20701 / CIP 104284 / JCM 5825 / NCTC 11152)).